A 49-amino-acid polypeptide reads, in one-letter code: Large ribosomal subunit protein bL33 (49 aa).

This sequence belongs to the bacterial ribosomal protein bL33 family.

This chain is Large ribosomal subunit protein bL33, found in Clostridioides difficile (strain 630) (Peptoclostridium difficile).